A 292-amino-acid chain; its full sequence is 4-amino-L-phenylalanine/4-methylamino-L-phenylalanine methyltransferase (292 aa).

Position 128–132 (Cys128–Gly132) interacts with S-adenosyl-L-methionine.

This sequence belongs to the protein N5-glutamine methyltransferase family.

The catalysed reaction is 4-amino-L-phenylalanine + S-adenosyl-L-methionine = 4-methylamino-L-phenylalanine + S-adenosyl-L-homocysteine + H(+). The enzyme catalyses 4-methylamino-L-phenylalanine + S-adenosyl-L-methionine = 4-dimethylamino-L-phenylalanine + S-adenosyl-L-homocysteine + H(+). Its pathway is antibiotic biosynthesis. In terms of biological role, involved in pristinamycin I biosynthesis. Catalyzes the SAM-dependent methylation of 4-amino-L-phenylalanine (PAPA) to 4-methylamino-L-phenylalanine (MMPAPA), and of MMPAPA to 4-dimethylamino-L-phenylalanine (DMPAPA). This Streptomyces pristinaespiralis protein is 4-amino-L-phenylalanine/4-methylamino-L-phenylalanine methyltransferase.